Here is a 145-residue protein sequence, read N- to C-terminus: Large ribosomal subunit protein uL13 (145 aa).

Belongs to the universal ribosomal protein uL13 family. Part of the 50S ribosomal subunit.

This protein is one of the early assembly proteins of the 50S ribosomal subunit, although it is not seen to bind rRNA by itself. It is important during the early stages of 50S assembly. In Bacillus cereus (strain G9842), this protein is Large ribosomal subunit protein uL13.